The primary structure comprises 195 residues: ATP-dependent Clp protease proteolytic subunit 2 (195 aa).

The active-site Nucleophile is Ser-98. Residue His-123 is part of the active site.

This sequence belongs to the peptidase S14 family. Fourteen ClpP subunits assemble into 2 heptameric rings which stack back to back to give a disk-like structure with a central cavity, resembling the structure of eukaryotic proteasomes.

Its subcellular location is the cytoplasm. The catalysed reaction is Hydrolysis of proteins to small peptides in the presence of ATP and magnesium. alpha-casein is the usual test substrate. In the absence of ATP, only oligopeptides shorter than five residues are hydrolyzed (such as succinyl-Leu-Tyr-|-NHMec, and Leu-Tyr-Leu-|-Tyr-Trp, in which cleavage of the -Tyr-|-Leu- and -Tyr-|-Trp bonds also occurs).. In terms of biological role, cleaves peptides in various proteins in a process that requires ATP hydrolysis. Has a chymotrypsin-like activity. Plays a major role in the degradation of misfolded proteins. The protein is ATP-dependent Clp protease proteolytic subunit 2 of Rhodopirellula baltica (strain DSM 10527 / NCIMB 13988 / SH1).